The primary structure comprises 185 residues: NEDD8-conjugating enzyme UBE2F (185 aa).

Residues 1 to 29 (MLTLASKLKREEGVRAGRTPAGSNDAAHR) form an interaction with uba3 region. In terms of domain architecture, UBC core spans 32–185 (IRDRLLIKEV…VQDFIKNYAR (154 aa)). Residue cysteine 116 is the Glycyl thioester intermediate of the active site.

The protein belongs to the ubiquitin-conjugating enzyme family. UBE2F subfamily.

The enzyme catalyses [E1 NEDD8-activating enzyme]-S-[NEDD8 protein]-yl-L-cysteine + [E2 NEDD8-conjugating enzyme]-L-cysteine = [E1 NEDD8-activating enzyme]-L-cysteine + [E2 NEDD8-conjugating enzyme]-S-[NEDD8-protein]-yl-L-cysteine.. Its pathway is protein modification; protein neddylation. Accepts the ubiquitin-like protein NEDD8 from the UBA3-NAE1 E1 complex and catalyzes its covalent attachment to other proteins. Together with the E3 ubiquitin ligase rnf7/rbx2, specifically neddylates cullin-5 (cul5). Does not neddylate cul1, cul2, cul3, cul4a or cul4b. In Danio rerio (Zebrafish), this protein is NEDD8-conjugating enzyme UBE2F (ube2f).